Reading from the N-terminus, the 466-residue chain is 3-isopropylmalate dehydratase large subunit (466 aa).

Positions 347, 407, and 410 each coordinate [4Fe-4S] cluster.

It belongs to the aconitase/IPM isomerase family. LeuC type 1 subfamily. As to quaternary structure, heterodimer of LeuC and LeuD. [4Fe-4S] cluster serves as cofactor.

It carries out the reaction (2R,3S)-3-isopropylmalate = (2S)-2-isopropylmalate. It participates in amino-acid biosynthesis; L-leucine biosynthesis; L-leucine from 3-methyl-2-oxobutanoate: step 2/4. In terms of biological role, catalyzes the isomerization between 2-isopropylmalate and 3-isopropylmalate, via the formation of 2-isopropylmaleate. In Pseudoalteromonas translucida (strain TAC 125), this protein is 3-isopropylmalate dehydratase large subunit.